We begin with the raw amino-acid sequence, 830 residues long: Septin and tuftelin-interacting protein 1 homolog (830 aa).

Positions 1–17 are enriched in acidic residues; the sequence is MEDDDGRESFEINDMDL. 2 disordered regions span residues 1 to 122 and 196 to 244; these read MEDD…PKQN and AYGK…KGSW. Positions 153–199 constitute a G-patch domain; the sequence is NSNKIMKMMQAMGYKPGEGLGAQGQGIVEPVQAQLRKGRGAVGAYGK.

Belongs to the TFP11/STIP family. Identified in the spliceosome C complex. Can assemble into large rod-like polymers. In terms of tissue distribution, detected in muscle cells from body, pharynx and vulva, in neurons from head and tail, in pharyngeal gland and in tail hypodermal cells.

The protein localises to the nucleus. Functionally, may be involved in pre-mRNA splicing. Required for embryonic development and survival. The protein is Septin and tuftelin-interacting protein 1 homolog (stip-1) of Caenorhabditis elegans.